We begin with the raw amino-acid sequence, 244 residues long: Probable 2-phosphosulfolactate phosphatase (244 aa).

This sequence belongs to the ComB family. The cofactor is Mg(2+).

The catalysed reaction is (2R)-O-phospho-3-sulfolactate + H2O = (2R)-3-sulfolactate + phosphate. This Cyanothece sp. (strain PCC 7425 / ATCC 29141) protein is Probable 2-phosphosulfolactate phosphatase.